The sequence spans 396 residues: Probable sugar efflux transporter (396 aa).

12 helical membrane-spanning segments follow: residues 15 to 35 (VVTL…PVGL), 50 to 70 (VGIM…PFML), 81 to 101 (LICL…SWSF), 103 to 123 (VLVI…SITA), 136 to 156 (AQAL…GLPL), 170 to 190 (FFAI…LLPL), 209 to 229 (PALM…YTAY), 246 to 266 (FATA…VIFG), 275 to 295 (TLVS…LPAA), 299 to 319 (IHLG…GLGM), 333 to 353 (VAMA…ALVG), and 364 to 384 (MIGY…IIIF).

It belongs to the major facilitator superfamily. SotB (TC 2.A.1.2) family.

The protein localises to the cell inner membrane. Its function is as follows. Involved in the efflux of sugars. The physiological role may be the reduction of the intracellular concentration of toxic sugars or sugar metabolites. The sequence is that of Probable sugar efflux transporter from Escherichia coli (strain SMS-3-5 / SECEC).